A 254-amino-acid polypeptide reads, in one-letter code: MNPIAFHVGNLAIRWYGVIISIGAALGLLLAMYNCKIREASYDEFINMFLIAFPSAIIGARLYYVIFEFEDYRDNLINIFNTRQGGLAIHGGIIFGVLAVYIYLKYRKENFFEYVDVAAPSIILGQAIGRWGNFFNSEAHGGPVTKEFISKFPQFIQKGMFIEGTYYHPTFLYESIWNFIVCIFLVYLLKKTKKKGIVFMAYIGLYSLGRFFIEGLRTDSLYLGSIRVAQLISVLGIILSIFFIYNIIKKEKRY.

3 helical membrane passes run Leu-11 to Ala-31, Phe-49 to Phe-69, and Gln-84 to Leu-104. Arg-130 is a binding site for a 1,2-diacyl-sn-glycero-3-phospho-(1'-sn-glycerol). 3 helical membrane passes run Pro-169–Leu-189, Gly-196–Leu-216, and Val-228–Ile-248.

Belongs to the Lgt family.

It is found in the cell membrane. The enzyme catalyses L-cysteinyl-[prolipoprotein] + a 1,2-diacyl-sn-glycero-3-phospho-(1'-sn-glycerol) = an S-1,2-diacyl-sn-glyceryl-L-cysteinyl-[prolipoprotein] + sn-glycerol 1-phosphate + H(+). Its pathway is protein modification; lipoprotein biosynthesis (diacylglyceryl transfer). In terms of biological role, catalyzes the transfer of the diacylglyceryl group from phosphatidylglycerol to the sulfhydryl group of the N-terminal cysteine of a prolipoprotein, the first step in the formation of mature lipoproteins. The protein is Phosphatidylglycerol--prolipoprotein diacylglyceryl transferase of Clostridium botulinum (strain Loch Maree / Type A3).